The sequence spans 144 residues: uncharacterized protein (144 aa).

Residues 23–82 (EELYKKLENNLRKIETSYLDSKHCQDFKRKIEYYKIVPLISETKEIIKVLIQKIETLEIK) are a coiled coil.

This is an uncharacterized protein from Acanthamoeba polyphaga mimivirus (APMV).